The primary structure comprises 411 residues: Lissencephaly-1 homolog (411 aa).

A LisH domain is found at 9-41 (QREELNQAIADYLGSNGYSSALEAFRKEADISG). Positions 56–83 (TSVIRLQKKVMELEAKLSEAEKEVIEGA) form a coiled coil. WD repeat units follow at residues 106-147 (GHRA…RSLK), 149-187 (HTSS…DCVK), 191-230 (GHDH…CVKT), 233-272 (GHRE…CKAE), 275-334 (AHDH…CLFV), 337-376 (GHDN…FMKT), and 379-411 (AHQH…WECR).

This sequence belongs to the WD repeat LIS1/nudF family.

The protein localises to the cytoplasm. Its subcellular location is the cytoskeleton. It is found in the microtubule organizing center. The protein resides in the centrosome. Functionally, positively regulates the activity of the minus-end directed microtubule motor protein dynein. May enhance dynein-mediated microtubule sliding by targeting dynein to the microtubule plus end. Required for several dynein- and microtubule-dependent processes. The polypeptide is Lissencephaly-1 homolog (Glossina morsitans morsitans (Savannah tsetse fly)).